Consider the following 286-residue polypeptide: Ferric acinetobactin reductase (286 aa).

Residues 25–131 (MEQLEMTIVS…IGPRPHFIPN (107 aa)) form the FAD-binding FR-type domain. Residues R79, V80, T82, D96, V98, H100, D102, S104, A106, R250, G252, and S255 each contribute to the FAD site.

This sequence belongs to the SIP oxidoreductase family. Monomer in solution. It depends on FAD as a cofactor.

The catalysed reaction is 2 a Fe(II)-siderophore + NAD(+) + H(+) = 2 a Fe(III)-siderophore + NADH. It catalyses the reaction 2 a Fe(II)-siderophore + NADP(+) + H(+) = 2 a Fe(III)-siderophore + NADPH. Functionally, ferric-siderophore reductase involved in iron removal from the siderophores after their transport into the cell. Interacts with the siderophores acinetobactin (Acb) and preacinetobactin (pre-Acb) and catalyzes the reduction of the ferric iron bound to the siderophores to ferrous iron, resulting in destabilization of the siderophore chelation complex and entrance of ferrous iron into the intracellular pool of bioavailable metals. Can use NADH and NADPH as electron donors in vitro, but the reduction rate is very slow, suggesting that NADH and NADPH are not the physiological partners of BauF. The chain is Ferric acinetobactin reductase from Acinetobacter baumannii.